The following is a 497-amino-acid chain: Amino acid oxidase fsqB (497 aa).

Residues Val14, Phe15, Asp38, Asn53, Ala57, Asn58, Arg63, Val64, and Val211 each contribute to the FAD site. The residue at position 414 (Cys414) is an S-8alpha-FAD cysteine. FAD is bound by residues Phe447 and Lys448.

This sequence belongs to the MSOX/MTOX family. In terms of assembly, dimer. Requires FAD as cofactor.

The catalysed reaction is (2S,4S,5S)-2-amino-6-(3,4-dihydroxyphenyl)-4-hydroxy-5-(methylamino)hexanoyl-[peptidyl-carrier protein] + O2 = (2S,4S)-2-amino-4-[(3S)-7,8-dihydroxy-1,2,3,4-tetrahydroisoquinolin-3-yl]-4-hydroxybutanoyl-[peptidyl-carrier protein] + H2O2. The enzyme catalyses N-methyl-L-dopa + O2 = (3S)-7,8-dihydroxy-1,2,3,4-tetrahydroisoquinoline-3-carboxylate + H2O2. It carries out the reaction N-methyl-D-dopa + O2 = (3R)-7,8-dihydroxy-1,2,3,4-tetrahydroisoquinoline-3-carboxylate + H2O2. Its pathway is secondary metabolite biosynthesis. Its function is as follows. Amino acid oxidase; part of the gene cluster that mediates the biosynthesis of the isoquinoline alkaloids fumisoquin A, fumisoquin B and fumisoquin C; as well as small amounts of fumipyrrole as a shunt metabolite. The products of the cluster lead to a brown coloration and are important for growth and conidiation. The nonribosomal peptide synthetase-like protein fsqF, which lacks a canonical condensation domain, is required for addition of a serine-derived dehydroalanine moiety to activated tyrosine but is not essential for the subsequent steps leading to isoquinoline formation. A different enzyme, most likely the ATP-grasp enzyme fsqD, is responsible for activation of tyrosine. Three additional enzymes encoded by the fsq cluster, the N-methyltransferase fsqC, the phenol 2-monooxygenase fsqG and the FAD-dependent oxidase fsqB, catalyze the formation of the isoquinoline ring system in the fumisoquins. FsqB converts the fspF thiolation domain-bound (2S,4S,5S)-2-amino-6-(3,4-dihydroxyphenyl)-4-hydroxy-5-(methylamino)hexanoyl into isoquinoline. The cyclization most likely proceeds via a two-step mechanism, beginning with FAD-dependent oxidation of the methyl group to an iminium species followed by electrophilic attack on the deprotonated phenol. Functionally, is able to convert N-methyl-3,4-dihydroxy-DL-phenylalanine (N-methyl-DOPA) directly into cyclic isoquinoline, in vitro. The absence of the meta-hydroxyl group, as in L-N-methyl-tyrosine, leads to a 25-fold lower rate of reduction and the formation of the demethylated product L-tyrosine, instead of a cyclic product. Does not accept the D-stereoisomer of N-methyltyrosine, in contrast to N-methyl-DOPA, for which both stereoisomers are oxidized with similar rates. This is Amino acid oxidase fsqB from Aspergillus fumigatus (strain ATCC MYA-4609 / CBS 101355 / FGSC A1100 / Af293) (Neosartorya fumigata).